Reading from the N-terminus, the 200-residue chain is Pyridoxal 5'-phosphate synthase subunit PdxT (200 aa).

Residue 52 to 54 participates in L-glutamine binding; sequence GES. C84 (nucleophile) is an active-site residue. L-glutamine is bound by residues R116 and 145–146; that span reads IR. Active-site charge relay system residues include H181 and E183.

This sequence belongs to the glutaminase PdxT/SNO family. In terms of assembly, in the presence of PdxS, forms a dodecamer of heterodimers. Only shows activity in the heterodimer.

The enzyme catalyses aldehydo-D-ribose 5-phosphate + D-glyceraldehyde 3-phosphate + L-glutamine = pyridoxal 5'-phosphate + L-glutamate + phosphate + 3 H2O + H(+). The catalysed reaction is L-glutamine + H2O = L-glutamate + NH4(+). Its pathway is cofactor biosynthesis; pyridoxal 5'-phosphate biosynthesis. In terms of biological role, catalyzes the hydrolysis of glutamine to glutamate and ammonia as part of the biosynthesis of pyridoxal 5'-phosphate. The resulting ammonia molecule is channeled to the active site of PdxS. The polypeptide is Pyridoxal 5'-phosphate synthase subunit PdxT (Sulfolobus acidocaldarius (strain ATCC 33909 / DSM 639 / JCM 8929 / NBRC 15157 / NCIMB 11770)).